Consider the following 247-residue polypeptide: Ras-like protein family member 11B (247 aa).

The small GTPase-like stretch occupies residues Ala-29 to Val-247. GTP is bound by residues Gly-40–Thr-47, Asp-87–Val-91, and Asn-152–Asp-155. A disordered region spans residues Gln-205–Asp-228.

This sequence belongs to the small GTPase superfamily. Ras family.

The catalysed reaction is GTP + H2O = GDP + phosphate + H(+). This is Ras-like protein family member 11B from Xenopus tropicalis (Western clawed frog).